A 467-amino-acid polypeptide reads, in one-letter code: 2-succinylbenzoate--CoA ligase (467 aa).

This sequence belongs to the ATP-dependent AMP-binding enzyme family. MenE subfamily.

The catalysed reaction is 2-succinylbenzoate + ATP + CoA = 2-succinylbenzoyl-CoA + AMP + diphosphate. The protein operates within quinol/quinone metabolism; 1,4-dihydroxy-2-naphthoate biosynthesis; 1,4-dihydroxy-2-naphthoate from chorismate: step 5/7. It functions in the pathway quinol/quinone metabolism; menaquinone biosynthesis. Converts 2-succinylbenzoate (OSB) to 2-succinylbenzoyl-CoA (OSB-CoA). The polypeptide is 2-succinylbenzoate--CoA ligase (Listeria monocytogenes serotype 4b (strain F2365)).